The sequence spans 216 residues: Cytochrome c biogenesis ATP-binding export protein CcmA (216 aa).

The ABC transporter domain maps to 11–216 (LSANELTCIR…RKITLDYRFV (206 aa)). 43 to 50 (GPNGAGKT) lines the ATP pocket.

The protein belongs to the ABC transporter superfamily. CcmA exporter (TC 3.A.1.107) family. As to quaternary structure, the complex is composed of two ATP-binding proteins (CcmA) and two transmembrane proteins (CcmB).

It localises to the cell inner membrane. It carries out the reaction heme b(in) + ATP + H2O = heme b(out) + ADP + phosphate + H(+). In terms of biological role, part of the ABC transporter complex CcmAB involved in the biogenesis of c-type cytochromes; once thought to export heme, this seems not to be the case, but its exact role is uncertain. Responsible for energy coupling to the transport system. This chain is Cytochrome c biogenesis ATP-binding export protein CcmA, found in Shewanella frigidimarina (strain NCIMB 400).